We begin with the raw amino-acid sequence, 225 residues long: Iron-sulfur flavoprotein CD630_04720 (225 aa).

Cysteine 49, cysteine 52, cysteine 55, and cysteine 61 together coordinate [4Fe-4S] cluster.

This sequence belongs to the SsuE family. Isf subfamily. Homodimer. FMN serves as cofactor. It depends on [4Fe-4S] cluster as a cofactor.

Functionally, redox-active protein probably involved in electron transport. The sequence is that of Iron-sulfur flavoprotein CD630_04720 from Clostridioides difficile (strain 630) (Peptoclostridium difficile).